Here is a 124-residue protein sequence, read N- to C-terminus: Aspartate 1-decarboxylase (124 aa).

Serine 25 functions as the Schiff-base intermediate with substrate; via pyruvic acid in the catalytic mechanism. Residue serine 25 is modified to Pyruvic acid (Ser). Threonine 57 contacts substrate. The active-site Proton donor is tyrosine 58. 73-75 (GAA) contributes to the substrate binding site.

It belongs to the PanD family. In terms of assembly, heterooctamer of four alpha and four beta subunits. It depends on pyruvate as a cofactor. Is synthesized initially as an inactive proenzyme, which is activated by self-cleavage at a specific serine bond to produce a beta-subunit with a hydroxyl group at its C-terminus and an alpha-subunit with a pyruvoyl group at its N-terminus.

The protein resides in the cytoplasm. The enzyme catalyses L-aspartate + H(+) = beta-alanine + CO2. Its pathway is cofactor biosynthesis; (R)-pantothenate biosynthesis; beta-alanine from L-aspartate: step 1/1. Its function is as follows. Catalyzes the pyruvoyl-dependent decarboxylation of aspartate to produce beta-alanine. This Syntrophobacter fumaroxidans (strain DSM 10017 / MPOB) protein is Aspartate 1-decarboxylase.